A 587-amino-acid polypeptide reads, in one-letter code: Aspartate--tRNA ligase (587 aa).

Glu-174 is an L-aspartate binding site. The segment at 198 to 201 is aspartate; it reads QTFK. Arg-220 contributes to the L-aspartate binding site. ATP contacts are provided by residues 220–222 and Gln-229; that span reads RDE. His-447 provides a ligand contact to L-aspartate. An ATP-binding site is contributed by Glu-481. Position 488 (Arg-488) interacts with L-aspartate. 533-536 serves as a coordination point for ATP; the sequence is GLDR.

This sequence belongs to the class-II aminoacyl-tRNA synthetase family. Type 1 subfamily. In terms of assembly, homodimer.

Its subcellular location is the cytoplasm. The enzyme catalyses tRNA(Asp) + L-aspartate + ATP = L-aspartyl-tRNA(Asp) + AMP + diphosphate. In terms of biological role, catalyzes the attachment of L-aspartate to tRNA(Asp) in a two-step reaction: L-aspartate is first activated by ATP to form Asp-AMP and then transferred to the acceptor end of tRNA(Asp). The polypeptide is Aspartate--tRNA ligase (Porphyromonas gingivalis (strain ATCC BAA-308 / W83)).